The primary structure comprises 229 residues: MIFLDYDGTLVPIIMNPEESYADAGLLSLISDLKERFDTYIVTGRSPEEISRFLPLDINMICYHGACSKINGQIVYNNGSDRFLGVFDRIYEDTRSWVSDFPGLRIYRKNLAVLYHLGLMGADMKPKLRSRIEEIARIFGVETYYGKMIIELRVPGVNKGSAIRSVRGERPAIIAGDDATDEAAFEANDDALTIKVGEGETHAKFHVADYIEMRKILKFIEMLGVQKKQ.

D5 acts as the Nucleophile in catalysis. Residues D5, D7, and D177 each contribute to the Mg(2+) site. 5 to 7 (DYD) contributes to the substrate binding site.

The protein belongs to the trehalose phosphatase family. It depends on Mg(2+) as a cofactor.

The catalysed reaction is alpha,alpha-trehalose 6-phosphate + H2O = alpha,alpha-trehalose + phosphate. It participates in glycan biosynthesis; trehalose biosynthesis. Its function is as follows. Removes the phosphate from trehalose 6-phosphate (Tre6P) to produce free trehalose. Also catalyzes the dephosphorylation of para-nitrophenyl phosphate (pNPP), but with lesser efficiency (in vitro). This chain is Trehalose-6-phosphate phosphatase-related protein, found in Thermoplasma acidophilum (strain ATCC 25905 / DSM 1728 / JCM 9062 / NBRC 15155 / AMRC-C165).